Reading from the N-terminus, the 395-residue chain is Scyllo-inosose 3-dehydrogenase (395 aa).

C66 is a binding site for Zn(2+). Residues S68 and H71 each act as charge relay system in the active site. Residues H95, E96, C131, C134, C137, C145, and E193 each coordinate Zn(2+). NAD(+) is bound by residues I223, E243, and R248.

Belongs to the zinc-containing alcohol dehydrogenase family. Homodimer. The cofactor is Zn(2+).

It carries out the reaction scyllo-inosose + NAD(+) = 3-dehydro-scyllo-inosose + NADH + H(+). The protein operates within polyol metabolism; myo-inositol metabolism. Its function is as follows. Catalyzes the NAD(+)-dependent oxidation of scyllo-inosose (2-keto-myo-inositol) to 3-dehydro-scyllo-inosose (diketo-inositol), and thus probably functions in a myo-inositol degradation pathway together with IolG, IolN and IolO. Has no activity on myo-inositol, D-chiro-inositol and 1-keto-D-chiro-inositol. This is Scyllo-inosose 3-dehydrogenase from Thermotoga maritima (strain ATCC 43589 / DSM 3109 / JCM 10099 / NBRC 100826 / MSB8).